The sequence spans 262 residues: Sulfite reductase, dissimilatory-type subunit beta (262 aa).

Residues cysteine 151, cysteine 188, cysteine 189, cysteine 193, cysteine 231, cysteine 258, and cysteine 261 each contribute to the [4Fe-4S] cluster site. Cysteine 193 provides a ligand contact to siroheme.

In terms of assembly, heterohexamer of two alpha, two beta and two gamma subunits. [4Fe-4S] cluster serves as cofactor. It depends on siroheme as a cofactor.

The catalysed reaction is [DsrC protein]-trisulfide + NAD(+) + 3 H2O = [DsrC protein]-dithiol + sulfite + NADH + 3 H(+). Functionally, catalyzes the reduction of sulfite to sulfide. This is the terminal oxidation reaction in sulfate respiration, a process catalyzed by the sulfate-reducing bacteria. This Megalodesulfovibrio gigas (strain ATCC 19364 / DSM 1382 / NCIMB 9332 / VKM B-1759) (Desulfovibrio gigas) protein is Sulfite reductase, dissimilatory-type subunit beta (dsrB).